The sequence spans 417 residues: UDP-N-acetylglucosamine 1-carboxyvinyltransferase (417 aa).

Residue 22-23 (KN) participates in phosphoenolpyruvate binding. R92 lines the UDP-N-acetyl-alpha-D-glucosamine pocket. C116 (proton donor) is an active-site residue. C116 carries the 2-(S-cysteinyl)pyruvic acid O-phosphothioketal modification. Positions 304 and 326 each coordinate UDP-N-acetyl-alpha-D-glucosamine.

It belongs to the EPSP synthase family. MurA subfamily.

Its subcellular location is the cytoplasm. It catalyses the reaction phosphoenolpyruvate + UDP-N-acetyl-alpha-D-glucosamine = UDP-N-acetyl-3-O-(1-carboxyvinyl)-alpha-D-glucosamine + phosphate. Its pathway is cell wall biogenesis; peptidoglycan biosynthesis. In terms of biological role, cell wall formation. Adds enolpyruvyl to UDP-N-acetylglucosamine. The chain is UDP-N-acetylglucosamine 1-carboxyvinyltransferase from Desulforapulum autotrophicum (strain ATCC 43914 / DSM 3382 / VKM B-1955 / HRM2) (Desulfobacterium autotrophicum).